A 122-amino-acid chain; its full sequence is Large ribosomal subunit protein uL14 (122 aa).

Belongs to the universal ribosomal protein uL14 family. Part of the 50S ribosomal subunit. Forms a cluster with proteins L3 and L19. In the 70S ribosome, L14 and L19 interact and together make contacts with the 16S rRNA in bridges B5 and B8.

Its function is as follows. Binds to 23S rRNA. Forms part of two intersubunit bridges in the 70S ribosome. The polypeptide is Large ribosomal subunit protein uL14 (Anaeromyxobacter sp. (strain Fw109-5)).